We begin with the raw amino-acid sequence, 244 residues long: 3-deoxy-manno-octulosonate cytidylyltransferase (244 aa).

The protein belongs to the KdsB family.

It is found in the cytoplasm. It catalyses the reaction 3-deoxy-alpha-D-manno-oct-2-ulosonate + CTP = CMP-3-deoxy-beta-D-manno-octulosonate + diphosphate. It participates in nucleotide-sugar biosynthesis; CMP-3-deoxy-D-manno-octulosonate biosynthesis; CMP-3-deoxy-D-manno-octulosonate from 3-deoxy-D-manno-octulosonate and CTP: step 1/1. Its pathway is bacterial outer membrane biogenesis; lipopolysaccharide biosynthesis. In terms of biological role, activates KDO (a required 8-carbon sugar) for incorporation into bacterial lipopolysaccharide in Gram-negative bacteria. This is 3-deoxy-manno-octulosonate cytidylyltransferase from Wolinella succinogenes (strain ATCC 29543 / DSM 1740 / CCUG 13145 / JCM 31913 / LMG 7466 / NCTC 11488 / FDC 602W) (Vibrio succinogenes).